The following is a 76-amino-acid chain: Conotoxin VnMKLT2-013 (76 aa).

Residues 1–23 form the signal peptide; the sequence is MMKLTCVLIIAVLFLTACQLTTA. Positions 24-42 are excised as a propeptide; it reads ETRDEYRAVRSSDEVQNSR. Positions 29–49 are disordered; it reads YRAVRSSDEVQNSRSTDDCST. Disulfide bonds link C47–C58, C52–C63, and C57–C72.

This sequence belongs to the conotoxin O1 superfamily. Expressed by the venom duct.

Its subcellular location is the secreted. The protein is Conotoxin VnMKLT2-013 of Conus ventricosus (Mediterranean cone).